A 298-amino-acid chain; its full sequence is Glycine--tRNA ligase alpha subunit (298 aa).

Belongs to the class-II aminoacyl-tRNA synthetase family. In terms of assembly, tetramer of two alpha and two beta subunits.

The protein localises to the cytoplasm. It carries out the reaction tRNA(Gly) + glycine + ATP = glycyl-tRNA(Gly) + AMP + diphosphate. The chain is Glycine--tRNA ligase alpha subunit from Gloeothece citriformis (strain PCC 7424) (Cyanothece sp. (strain PCC 7424)).